A 183-amino-acid polypeptide reads, in one-letter code: Ribonuclease H (183 aa).

Residues 2–151 (SQARFIAFSD…VDQLAQAAAR (150 aa)) enclose the RNase H type-1 domain. The Mg(2+) site is built by aspartate 11, glutamate 57, aspartate 79, and aspartate 143.

Belongs to the RNase H family. Monomer. The cofactor is Mg(2+).

The protein localises to the cytoplasm. The catalysed reaction is Endonucleolytic cleavage to 5'-phosphomonoester.. Functionally, endonuclease that specifically degrades the RNA of RNA-DNA hybrids. The chain is Ribonuclease H from Anaeromyxobacter sp. (strain K).